The following is a 274-amino-acid chain: Urease accessory protein UreD (274 aa).

It belongs to the UreD family. In terms of assembly, ureD, UreF and UreG form a complex that acts as a GTP-hydrolysis-dependent molecular chaperone, activating the urease apoprotein by helping to assemble the nickel containing metallocenter of UreC. The UreE protein probably delivers the nickel.

The protein resides in the cytoplasm. Required for maturation of urease via the functional incorporation of the urease nickel metallocenter. This chain is Urease accessory protein UreD, found in Klebsiella pneumoniae subsp. pneumoniae (strain ATCC 700721 / MGH 78578).